The chain runs to 306 residues: Solute carrier family 25 member 48 (306 aa).

3 Solcar repeats span residues Ser-3–Phe-86, Arg-101–Trp-200, and Pro-209–Ala-296. The next 6 membrane-spanning stretches (helical) occupy residues Phe-9–Val-29, Gly-61–Ser-81, Leu-107–Ile-127, Ile-184–Glu-204, Tyr-212–Met-232, and Ile-272–Tyr-290.

It belongs to the mitochondrial carrier (TC 2.A.29) family.

It is found in the mitochondrion inner membrane. The sequence is that of Solute carrier family 25 member 48 (Slc25a48) from Mus musculus (Mouse).